The primary structure comprises 128 residues: Fluoride-specific ion channel FluC (128 aa).

A run of 4 helical transmembrane segments spans residues 3 to 23 (FTTIFYIGFGGALGAILRSFT), 34 to 54 (LSFPLGTLSVNIIGGFFIGFL), 65 to 85 (INLKSFLVTGFLGGLTTFSTF), and 102 to 122 (FLNIASNLLLSLLFCYFGFWI). Na(+)-binding residues include Gly77 and Thr80.

It belongs to the fluoride channel Fluc/FEX (TC 1.A.43) family.

It is found in the cell inner membrane. It catalyses the reaction fluoride(in) = fluoride(out). With respect to regulation, na(+) is not transported, but it plays an essential structural role and its presence is essential for fluoride channel function. Fluoride-specific ion channel. Important for reducing fluoride concentration in the cell, thus reducing its toxicity. This is Fluoride-specific ion channel FluC from Campylobacter fetus subsp. fetus (strain 82-40).